Reading from the N-terminus, the 201-residue chain is Glycolipid transfer protein (201 aa).

Positions isoleucine 28–aspartate 168 are glycolipid transfer protein homology domain.

Its function is as follows. Cargo transport protein that plays a key role in transport and secretion of liamocins, glycolipids (also called heavy oils) composed of a single mannitol or arabitol headgroup linked to either three, four or even six 3,5-dihydroxydecanoic ester tail-groups. This chain is Glycolipid transfer protein, found in Aureobasidium melanogenum (Aureobasidium pullulans var. melanogenum).